A 1690-amino-acid chain; its full sequence is MATGSAQSSFPSHLKKTNGSHGTNGALVQSPSNQSALGAGGTNGNGGVARVWGVATSSSSGLAHCSVGGGDGKMDNMIGDGRSQNCWGASNSNAGINLNLNPNANPAAWPVLGHEGTVATGNPSSICSPVSAIGQNMGSQNGNPVGALGAWGNLLPQESAEPQTSTSQNVSFSVQPQNLNTDGPNNTNPMNSSPNPINAMQTNGLPNWGMAVGMGAIIPPHLQGLPGANGSSVSQGSGSGGEGMGSSVWGLSPGNPATGSTNCGFSQGNGDTVNSALSAKQNGSSSAVQKEGNGGNAWDSGPPAGPGILAWGRGSGTNGIGNIHSGAWGHPSRSSSNGVNGEWGKPPNQHSSSDISGKGSTGWDSASAASQTPALQPGSEHMNSWAKATSSGTTASEGSSDGSGNHNEGSTGREGTGEGRRRDKGVLDQGHIQLPRNDLDPRVLSNSGWGQTPVKQNTAWEFEESPRSERKNDNGTEAWGSIATQPSNSGGKTDGSIMNSTNTSSVSGWVSSPPAAVPANTSWGDSNNKAPSGPGVWGDSISSTAVNNAAATKSGHAWSGTVNQEDKSPTWGEPQKPKSQNWGDGQRANPAWSTGAGDWADSSSVLGHLGDGKKNGSGWDADGNRSGSGWNDATRCGTSGWGSGTNAKVNPGTNWGESLKPGPQQNWAHKPQDNNVSNWGGAASVKQTGTGWIGGPLPVKQKDSSEATGWEEPSPPSIRRKMEIDDGTSAWGDPSTYNNKTVNMWDRNNPVIQSSTTAPATPTTPTSSSTTHRAETPPSHQAGTQLNRSPLLGPVSSGWGEMPSVHSKAENSWGEPSSPCTLVDNGTAAWGKPPSSGSGWDHPAEPVVPFGRASAPAAAPALCKPASKSMQEGWGSGADEMNLGTSQWEDEDGDMWNNAASQESSSSCSSWGNTSKKGLQKGMKTPGKQDEAWIMSRLIKQLTDMGFPREPAEEALKSNSMNLDQAMSALLEKKVDMDKRGLGMTDYNGMVTKPLGCRPPISKESSMDRPTFLDKLTLSFSNQDGGLVEEPTTSPFLPSPSLKLPLSNSALPSQALGGVASGLGMQNLNSSRQIPSGNLGVFGNSGAAQARTMQQPPVQPLNSSQPSLRAQVPQFLSPQVQAQLLQFAAKNIGLSPALLTSPINPQHMTMLNQLYQLQLAYQRLQIQQQMLQAQRNVSGPMRQQEQQVARTITNLQQQIQQHQRQLAQALLVKQPPPPPPPPHLSLHPSAGKSGMESFPPPPQAPGLPDLQTKEQQSSPNTFAPYPLAGLNPNMNVNSIDMSSGLSVKDPSQSQSRLPQWTHPNSMGNLSSAASPLDQNPSKHGAIPGGLSIGPPGKSSIDDSYGRYDLIQNSESPASPPVAVPHSWSRAKSDSDKISNGSSISWPPEFHPGVPWKGLQNIDPENDPDVTPGSVPTGPTINTTIQDVNRYLLKSGGKLSDIKSTWSSGPASHTQASLSHELWKVPRNTTAPTRPPPGLANPKPSSTWGTSPLGWTSSYSSGSAWSTDTSGRTSSWLVLRNLTPQIDGSTLRTLCLQHGPLITFHLNLTQGNAVVRYSSKEEAAKAQKSLHMCVLGNTTILAEFAGEEEVNRFLAQGQALPPTSSWQSSSGGSQPRLGTSGSTHGLVRSDTAHWNTPCLSGKGSSELLWGGVPQYSSSLWGPPSAEDARVIGSPTPLNTLLPGDLLSGESI.

3 stretches are compositionally biased toward polar residues: residues 1–12, 19–36, and 160–183; these read MATGSAQSSFPS, GSHG…NQSA, and AEPQ…NTDG. Disordered regions lie at residues 1–42, 158–202, 226–848, and 863–928; these read MATG…AGGT, ESAE…AMQT, PGAN…EPVV, and CKPA…TPGK. The tract at residues 1-921 is sufficient for interaction with argonaute family proteins; it reads MATGSAQSSF…GNTSKKGLQK (921 aa). Residues 184 to 198 are compositionally biased toward low complexity; that stretch reads PNNTNPMNSSPNPIN. The segment covering 255–288 has biased composition (polar residues); it reads NPATGSTNCGFSQGNGDTVNSALSAKQNGSSSAV. Arg-313 is subject to Omega-N-methylarginine. Positions 362-374 are enriched in polar residues; it reads GWDSASAASQTPA. Residues 384 to 404 are compositionally biased toward low complexity; sequence SWAKATSSGTTASEGSSDGSG. The segment covering 415-426 has biased composition (basic and acidic residues); that stretch reads GTGEGRRRDKGV. The span at 444-459 shows a compositional bias: polar residues; sequence LSNSGWGQTPVKQNTA. Residues 464–474 show a composition bias toward basic and acidic residues; sequence ESPRSERKNDN. Phosphoserine is present on Ser-465. 5 stretches are compositionally biased toward polar residues: residues 482–510, 519–530, 540–551, 644–656, and 663–678; these read IATQ…SGWV, ANTSWGDSNNKA, SISSTAVNNAAA, GTNA…TNWG, and PQQN…NVSN. Ser-714 carries the post-translational modification Phosphoserine. Residues 754–771 show a composition bias toward low complexity; it reads SSTTAPATPTTPTSSSTT. A Phosphothreonine modification is found at Thr-776. Positions 778-788 are enriched in polar residues; that stretch reads PSHQAGTQLNR. Residues 901–915 are compositionally biased toward low complexity; it reads SQESSSSCSSWGNTS. A UBA domain is found at 928 to 973; the sequence is KQDEAWIMSRLIKQLTDMGFPREPAEEALKSNSMNLDQAMSALLEK. Position 1006 is a phosphoserine (Ser-1006). The stretch at 1156–1214 forms a coiled coil; the sequence is QLQLAYQRLQIQQQMLQAQRNVSGPMRQQEQQVARTITNLQQQIQQHQRQLAQALLVKQ. Disordered regions lie at residues 1212–1337, 1351–1380, 1397–1421, 1441–1486, and 1600–1625; these read VKQP…PPGK, QNSE…ISNG, GLQN…PTIN, IKST…PSST, and PPTS…THGL. Pro residues predominate over residues 1214–1223; sequence QPPPPPPPPH. Positions 1260–1690 are silencing domain; interaction with CNOT1 and PAN3; sequence NTFAPYPLAG…PGDLLSGESI (431 aa). Polar residues predominate over residues 1272–1321; it reads PNMNVNSIDMSSGLSVKDPSQSQSRLPQWTHPNSMGNLSSAASPLDQNPS. The interval 1371–1417 is required for interaction with PABPC1; it reads KSDSDKISNGSSISWPPEFHPGVPWKGLQNIDPENDPDVTPGSVPTG. Positions 1371 to 1690 are sufficient for translational repression when tethered to a target mRNA; sequence KSDSDKISNG…PGDLLSGESI (320 aa). The interval 1381–1399 is PABPC1-interacting motif-2 (PAM2); the sequence is SSISWPPEFHPGVPWKGLQ. The segment covering 1441-1457 has biased composition (polar residues); it reads IKSTWSSGPASHTQASL. In terms of domain architecture, RRM spans 1565–1632; sequence AQKSLHMCVL…HGLVRSDTAH (68 aa). Positions 1596–1690 are interaction with the CCR4-NOT complex; sequence GQALPPTSSW…PGDLLSGESI (95 aa). Residues 1603 to 1613 are compositionally biased toward low complexity; it reads SSWQSSSGGSQ.

The protein belongs to the GW182 family. Interacts with one or more of the argonaute family proteins AGO1, AGO2, AGO3 and AGO4. Interacts with CNOT1; the interaction mediates the association with the CCR4-NOT complex. Interacts with PAN3; the interaction mediates the association with the PAN complex.

Functionally, plays a role in RNA-mediated gene silencing by micro-RNAs (miRNAs). Required for miRNA-dependent translational repression of complementary mRNAs by argonaute family proteins As scaffoldng protein associates with argonaute proteins bound to partially complementary mRNAs and simultaneously can recruit CCR4-NOT and PAN deadenylase complexes. This chain is Trinucleotide repeat-containing gene 6C protein (Tnrc6c), found in Mus musculus (Mouse).